Consider the following 376-residue polypeptide: DNA-directed RNA polymerase subunit alpha (376 aa).

Residues 1–259 (MSDCSQNLLY…KHFSIFEKMD (259 aa)) form an alpha N-terminal domain (alpha-NTD) region. The tract at residues 276–376 (KDDILHKLVL…DKIRSKNGKG (101 aa)) is alpha C-terminal domain (alpha-CTD).

The protein belongs to the RNA polymerase alpha chain family. Homodimer. The RNAP catalytic core consists of 2 alpha, 1 beta, 1 beta' and 1 omega subunit. When a sigma factor is associated with the core the holoenzyme is formed, which can initiate transcription.

The enzyme catalyses RNA(n) + a ribonucleoside 5'-triphosphate = RNA(n+1) + diphosphate. Functionally, DNA-dependent RNA polymerase catalyzes the transcription of DNA into RNA using the four ribonucleoside triphosphates as substrates. The polypeptide is DNA-directed RNA polymerase subunit alpha (Chlamydia abortus (strain DSM 27085 / S26/3) (Chlamydophila abortus)).